A 456-amino-acid polypeptide reads, in one-letter code: CCA-adding enzyme (456 aa).

Positions 53 and 56 each coordinate ATP. Positions 53 and 56 each coordinate CTP. Positions 65, 67, and 119 each coordinate Mg(2+). His-142, Lys-161, and Tyr-170 together coordinate ATP. CTP-binding residues include His-142, Lys-161, and Tyr-170.

Belongs to the tRNA nucleotidyltransferase/poly(A) polymerase family. Archaeal CCA-adding enzyme subfamily. In terms of assembly, homodimer. Mg(2+) serves as cofactor.

The catalysed reaction is a tRNA precursor + 2 CTP + ATP = a tRNA with a 3' CCA end + 3 diphosphate. It catalyses the reaction a tRNA with a 3' CCA end + 2 CTP + ATP = a tRNA with a 3' CCACCA end + 3 diphosphate. Catalyzes the addition and repair of the essential 3'-terminal CCA sequence in tRNAs without using a nucleic acid template. Adds these three nucleotides in the order of C, C, and A to the tRNA nucleotide-73, using CTP and ATP as substrates and producing inorganic pyrophosphate. tRNA 3'-terminal CCA addition is required both for tRNA processing and repair. Also involved in tRNA surveillance by mediating tandem CCA addition to generate a CCACCA at the 3' terminus of unstable tRNAs. While stable tRNAs receive only 3'-terminal CCA, unstable tRNAs are marked with CCACCA and rapidly degraded. This chain is CCA-adding enzyme, found in Thermococcus kodakarensis (strain ATCC BAA-918 / JCM 12380 / KOD1) (Pyrococcus kodakaraensis (strain KOD1)).